A 142-amino-acid chain; its full sequence is Large ribosomal subunit protein uL11 (142 aa).

This sequence belongs to the universal ribosomal protein uL11 family. Part of the ribosomal stalk of the 50S ribosomal subunit. Interacts with L10 and the large rRNA to form the base of the stalk. L10 forms an elongated spine to which L12 dimers bind in a sequential fashion forming a multimeric L10(L12)X complex. Post-translationally, one or more lysine residues are methylated.

Its function is as follows. Forms part of the ribosomal stalk which helps the ribosome interact with GTP-bound translation factors. The chain is Large ribosomal subunit protein uL11 from Vibrio vulnificus (strain YJ016).